A 417-amino-acid polypeptide reads, in one-letter code: Serine hydroxymethyltransferase (417 aa).

(6S)-5,6,7,8-tetrahydrofolate-binding positions include L121 and 125–127 (GHL). The residue at position 229 (K229) is an N6-(pyridoxal phosphate)lysine. Residue 355 to 357 (SPF) participates in (6S)-5,6,7,8-tetrahydrofolate binding.

Belongs to the SHMT family. As to quaternary structure, homodimer. Pyridoxal 5'-phosphate serves as cofactor.

The protein localises to the cytoplasm. It carries out the reaction (6R)-5,10-methylene-5,6,7,8-tetrahydrofolate + glycine + H2O = (6S)-5,6,7,8-tetrahydrofolate + L-serine. Its pathway is one-carbon metabolism; tetrahydrofolate interconversion. It participates in amino-acid biosynthesis; glycine biosynthesis; glycine from L-serine: step 1/1. In terms of biological role, catalyzes the reversible interconversion of serine and glycine with tetrahydrofolate (THF) serving as the one-carbon carrier. This reaction serves as the major source of one-carbon groups required for the biosynthesis of purines, thymidylate, methionine, and other important biomolecules. Also exhibits THF-independent aldolase activity toward beta-hydroxyamino acids, producing glycine and aldehydes, via a retro-aldol mechanism. This Shewanella denitrificans (strain OS217 / ATCC BAA-1090 / DSM 15013) protein is Serine hydroxymethyltransferase.